Here is a 343-residue protein sequence, read N- to C-terminus: Phosphate acyltransferase (343 aa).

It belongs to the PlsX family. As to quaternary structure, homodimer. Probably interacts with PlsY.

The protein resides in the cytoplasm. It catalyses the reaction a fatty acyl-[ACP] + phosphate = an acyl phosphate + holo-[ACP]. It participates in lipid metabolism; phospholipid metabolism. Its function is as follows. Catalyzes the reversible formation of acyl-phosphate (acyl-PO(4)) from acyl-[acyl-carrier-protein] (acyl-ACP). This enzyme utilizes acyl-ACP as fatty acyl donor, but not acyl-CoA. The polypeptide is Phosphate acyltransferase (Haemophilus ducreyi (strain 35000HP / ATCC 700724)).